Here is a 487-residue protein sequence, read N- to C-terminus: Iron-sulfur cluster assembly SufBD family protein ycf24 (487 aa).

Belongs to the iron-sulfur cluster assembly SufBD family.

The protein resides in the plastid. It localises to the chloroplast. This is Iron-sulfur cluster assembly SufBD family protein ycf24 (ycf24) from Pyropia yezoensis (Susabi-nori).